We begin with the raw amino-acid sequence, 546 residues long: Chaperonin GroEL (546 aa).

ATP-binding positions include 30–33 (TLGP), Lys-51, 87–91 (DGTTT), Gly-415, 479–481 (NAA), and Asp-495.

It belongs to the chaperonin (HSP60) family. In terms of assembly, forms a cylinder of 14 subunits composed of two heptameric rings stacked back-to-back. Interacts with the co-chaperonin GroES.

Its subcellular location is the cytoplasm. It catalyses the reaction ATP + H2O + a folded polypeptide = ADP + phosphate + an unfolded polypeptide.. Functionally, together with its co-chaperonin GroES, plays an essential role in assisting protein folding. The GroEL-GroES system forms a nano-cage that allows encapsulation of the non-native substrate proteins and provides a physical environment optimized to promote and accelerate protein folding. The protein is Chaperonin GroEL of Azotobacter vinelandii.